The sequence spans 260 residues: Sperm microtubule inner protein 6 (260 aa).

This sequence belongs to the SPMIP6 family. Microtubule inner protein component of sperm flagellar doublet microtubules. Interacts with alpha-tubulin. As to expression, testis-specific, expressed exclusively in germ cells (at protein level). In terms of tissue distribution, testis-specific. Expressed in both lung and testis.

The protein resides in the cytoplasm. It localises to the cytoskeleton. Its subcellular location is the nucleus. It is found in the mitochondrion. The protein localises to the flagellum axoneme. Its function is as follows. May participate in intramanchette transport and midpiece formation of the sperm tail. May play a potential role in somatic cell proliferation. This Mus musculus (Mouse) protein is Sperm microtubule inner protein 6 (SPMIP6).